Consider the following 202-residue polypeptide: Diadenylate cyclase (202 aa).

The helical transmembrane segment at 6–26 threads the bilayer; it reads VFSVIILVLLFLILALTLLFV. One can recognise a DAC domain in the interval 29–185; the sequence is NKRTRSFVIR…RGVIKTLSSN (157 aa).

The protein belongs to the adenylate cyclase family. DacB/CdaS subfamily. Probably oligomerizes.

Its subcellular location is the cell membrane. It catalyses the reaction 2 ATP = 3',3'-c-di-AMP + 2 diphosphate. Functionally, catalyzes the condensation of 2 ATP molecules into cyclic di-AMP (c-di-AMP), a second messenger used to regulate differing processes in different bacteria. This Mycoplasma pneumoniae (strain ATCC 29342 / M129 / Subtype 1) (Mycoplasmoides pneumoniae) protein is Diadenylate cyclase.